The following is a 71-amino-acid chain: Small ribosomal subunit protein bS21 (71 aa).

It belongs to the bacterial ribosomal protein bS21 family.

This is Small ribosomal subunit protein bS21 from Buchnera aphidicola subsp. Acyrthosiphon pisum (strain 5A).